A 471-amino-acid polypeptide reads, in one-letter code: Alpha-galactosidase 1 (471 aa).

A signal peptide spans 1–18; that stretch reads MFAFYFLTACISLKGVFG. Cys42 and Cys74 are joined by a disulfide. Substrate contacts are provided by Asp72 and Asp73. N-linked (GlcNAc...) asparagine glycosylation occurs at Asn105. Cys121 and Cys151 are joined by a disulfide. Lys147 lines the substrate pocket. Asp149 serves as the catalytic Nucleophile. Asn175 carries an N-linked (GlcNAc...) asparagine glycan. Arg205 serves as a coordination point for substrate. Asp209 serves as the catalytic Proton donor. 2 cysteine pairs are disulfide-bonded: Cys221–Cys237 and Cys223–Cys230. A substrate-binding site is contributed by Gln251. Residues Asn270, Asn370, Asn403, Asn413, Asn422, Asn435, and Asn454 are each glycosylated (N-linked (GlcNAc...) asparagine).

The protein belongs to the glycosyl hydrolase 27 family. As to quaternary structure, homotetramer.

It localises to the secreted. It carries out the reaction Hydrolysis of terminal, non-reducing alpha-D-galactose residues in alpha-D-galactosides, including galactose oligosaccharides, galactomannans and galactolipids.. The polypeptide is Alpha-galactosidase 1 (MEL1) (Saccharomyces cerevisiae (Baker's yeast)).